The chain runs to 353 residues: Photosystem II protein D1 (353 aa).

At T2 the chain carries N-acetylthreonine. T2 carries the phosphothreonine modification. 3 consecutive transmembrane segments (helical) span residues 29-46 (YIGWFGVLMIPTLLTATS), 118-133 (HFLLGVACYMGREWEL), and 142-156 (WIAVAYSAPVAAATA). H118 serves as a coordination point for chlorophyll a. Y126 contributes to the pheophytin a binding site. The [CaMn4O5] cluster site is built by D170 and E189. A helical membrane pass occupies residues 197-218 (FHMLGVAGVFGGSLFSAMHGSL). H198 contacts chlorophyll a. A quinone-binding positions include H215 and 264–265 (SF). Residue H215 participates in Fe cation binding. Fe cation is bound at residue H272. Residues 274-288 (FLAAWPVAGIWFTAL) form a helical membrane-spanning segment. The [CaMn4O5] cluster site is built by H332, E333, D342, and A344. Residues 345–353 (AVESISIGG) constitute a propeptide that is removed on maturation.

It belongs to the reaction center PufL/M/PsbA/D family. PSII is composed of 1 copy each of membrane proteins PsbA, PsbB, PsbC, PsbD, PsbE, PsbF, PsbH, PsbI, PsbJ, PsbK, PsbL, PsbM, PsbT, PsbX, PsbY, PsbZ, Psb30/Ycf12, at least 3 peripheral proteins of the oxygen-evolving complex and a large number of cofactors. It forms dimeric complexes. The D1/D2 heterodimer binds P680, chlorophylls that are the primary electron donor of PSII, and subsequent electron acceptors. It shares a non-heme iron and each subunit binds pheophytin, quinone, additional chlorophylls, carotenoids and lipids. D1 provides most of the ligands for the Mn4-Ca-O5 cluster of the oxygen-evolving complex (OEC). There is also a Cl(-1) ion associated with D1 and D2, which is required for oxygen evolution. The PSII complex binds additional chlorophylls, carotenoids and specific lipids. is required as a cofactor. Tyr-161 forms a radical intermediate that is referred to as redox-active TyrZ, YZ or Y-Z. In terms of processing, C-terminally processed by CTPA; processing is essential to allow assembly of the oxygen-evolving complex and thus photosynthetic growth.

Its subcellular location is the plastid. The protein localises to the chloroplast thylakoid membrane. The catalysed reaction is 2 a plastoquinone + 4 hnu + 2 H2O = 2 a plastoquinol + O2. Its function is as follows. Photosystem II (PSII) is a light-driven water:plastoquinone oxidoreductase that uses light energy to abstract electrons from H(2)O, generating O(2) and a proton gradient subsequently used for ATP formation. It consists of a core antenna complex that captures photons, and an electron transfer chain that converts photonic excitation into a charge separation. The D1/D2 (PsbA/PsbD) reaction center heterodimer binds P680, the primary electron donor of PSII as well as several subsequent electron acceptors. This is Photosystem II protein D1 from Pinus contorta (Shore pine).